The following is a 161-amino-acid chain: Photosystem I reaction center subunit XI (161 aa).

The next 2 membrane-spanning stretches (helical) occupy residues 84–104 and 126–146; these read LISTIALVLIATICLSAYGLV and FTGGFFIGAMGGAVVAFFLLE.

Belongs to the PsaL family.

It localises to the cellular thylakoid membrane. This Trichodesmium erythraeum (strain IMS101) protein is Photosystem I reaction center subunit XI.